The sequence spans 223 residues: MLGGSAHGGPVFGGVQAPGARYILPSFEERTAYGYKRQDPYAKLFEDRIIFLGVQVDDASADDIMAQLLVLESQDPDRDIVMYINSPGGSFTAMTAIYDTMQYVRPQIQTVVLGQAASAAAVLTAAGAPGKRLALPNARILIHQPAVGEAGHGQASDILIQSNEINRMRAWLEETLVKHSSRTLEQVNKDIERDNILSATEALKYGLIDQVLTSRKTLPALVK.

Ser118 acts as the Nucleophile in catalysis. Residue His143 is part of the active site.

The protein belongs to the peptidase S14 family. In terms of assembly, fourteen ClpP subunits assemble into 2 heptameric rings which stack back to back to give a disk-like structure with a central cavity, resembling the structure of eukaryotic proteasomes.

It is found in the cytoplasm. It catalyses the reaction Hydrolysis of proteins to small peptides in the presence of ATP and magnesium. alpha-casein is the usual test substrate. In the absence of ATP, only oligopeptides shorter than five residues are hydrolyzed (such as succinyl-Leu-Tyr-|-NHMec, and Leu-Tyr-Leu-|-Tyr-Trp, in which cleavage of the -Tyr-|-Leu- and -Tyr-|-Trp bonds also occurs).. Its function is as follows. Cleaves peptides in various proteins in a process that requires ATP hydrolysis. Has a chymotrypsin-like activity. Plays a major role in the degradation of misfolded proteins. The protein is ATP-dependent Clp protease proteolytic subunit 2 of Leifsonia xyli subsp. xyli (strain CTCB07).